A 279-amino-acid polypeptide reads, in one-letter code: Toxin TxP-I (279 aa).

A signal peptide spans 1–14 (MNLFFLFIIPTILA). The propeptide occupies 15–27 (VKPFRSFNNISLI).

Contains several disulfide bonds. Posterior glands which appear to be connected with the stylet through a series of ducts.

It is found in the secreted. In terms of biological role, part of a complex mixture of neurotoxins which P.tritici utilizes to capture prey. It has contracting-paralyzing activity in insects. The sequence is that of Toxin TxP-I from Pyemotes tritici (Straw itch mite).